The following is a 557-amino-acid chain: Ubiquitin C-terminal hydrolase 22 (557 aa).

The UBP-type; degenerate zinc-finger motif lies at 36–130; it reads FRCFNDARIK…VSKQLFGLGM (95 aa). Positions 56, 59, 69, 72, 77, 80, 84, and 91 each coordinate Zn(2+). A USP domain is found at 177-531; that stretch reads RGLNNLGSTC…ECYMLFYAQE (355 aa). The active-site Nucleophile is cysteine 186. Catalysis depends on histidine 491, which acts as the Proton acceptor.

It belongs to the peptidase C19 family. Component of a deubiquitination module (DUB module) formed by ENY2, SGF11, and UBP22 in Arabidopsis. Interacts directly with SGF11, but not with ENY2.

It localises to the nucleus. The protein resides in the nucleoplasm. The enzyme catalyses Thiol-dependent hydrolysis of ester, thioester, amide, peptide and isopeptide bonds formed by the C-terminal Gly of ubiquitin (a 76-residue protein attached to proteins as an intracellular targeting signal).. In terms of biological role, component of a deubiquitination module (DUB module) that specifically deubiquinates monoubiquinated histone H2B (H2Bub). Does not seem to be a component of the TREX-2 complex. Seems to act independently of the SAGA multiprotein complex. The DUB module is responsible for the major H2Bub deubiquitinase activity in Arabidopsis. The sequence is that of Ubiquitin C-terminal hydrolase 22 from Arabidopsis thaliana (Mouse-ear cress).